The following is a 199-amino-acid chain: Protein P1 (199 aa).

The polypeptide is Protein P1 (Rice tungro bacilliform virus (isolate Philippines) (RTBV)).